The sequence spans 456 residues: Argininosuccinate lyase (456 aa).

It belongs to the lyase 1 family. Argininosuccinate lyase subfamily.

Its subcellular location is the cytoplasm. The enzyme catalyses 2-(N(omega)-L-arginino)succinate = fumarate + L-arginine. The protein operates within amino-acid biosynthesis; L-arginine biosynthesis; L-arginine from L-ornithine and carbamoyl phosphate: step 3/3. The sequence is that of Argininosuccinate lyase from Shewanella pealeana (strain ATCC 700345 / ANG-SQ1).